Consider the following 190-residue polypeptide: UPF0301 protein Rmet_2743 (190 aa).

It belongs to the UPF0301 (AlgH) family.

The protein is UPF0301 protein Rmet_2743 of Cupriavidus metallidurans (strain ATCC 43123 / DSM 2839 / NBRC 102507 / CH34) (Ralstonia metallidurans).